The sequence spans 134 residues: Small ribosomal subunit protein uS11 (134 aa).

This sequence belongs to the universal ribosomal protein uS11 family. In terms of assembly, part of the 30S ribosomal subunit. Interacts with proteins S7 and S18. Binds to IF-3.

Functionally, located on the platform of the 30S subunit, it bridges several disparate RNA helices of the 16S rRNA. Forms part of the Shine-Dalgarno cleft in the 70S ribosome. The protein is Small ribosomal subunit protein uS11 of Paraburkholderia xenovorans (strain LB400).